A 314-amino-acid chain; its full sequence is Methionyl-tRNA formyltransferase (314 aa).

Position 110–113 (110–113 (SLLP)) interacts with (6S)-5,6,7,8-tetrahydrofolate.

Belongs to the Fmt family.

It carries out the reaction L-methionyl-tRNA(fMet) + (6R)-10-formyltetrahydrofolate = N-formyl-L-methionyl-tRNA(fMet) + (6S)-5,6,7,8-tetrahydrofolate + H(+). In terms of biological role, attaches a formyl group to the free amino group of methionyl-tRNA(fMet). The formyl group appears to play a dual role in the initiator identity of N-formylmethionyl-tRNA by promoting its recognition by IF2 and preventing the misappropriation of this tRNA by the elongation apparatus. In Bacillus cereus (strain AH187), this protein is Methionyl-tRNA formyltransferase.